The primary structure comprises 558 residues: Dihydroxy-acid dehydratase (558 aa).

Residue Asp-81 participates in Mg(2+) binding. Cys-122 contributes to the [2Fe-2S] cluster binding site. Residues Asp-123 and Lys-124 each coordinate Mg(2+). N6-carboxylysine is present on Lys-124. Residue Cys-195 participates in [2Fe-2S] cluster binding. Residue Glu-447 participates in Mg(2+) binding. Ser-473 (proton acceptor) is an active-site residue.

This sequence belongs to the IlvD/Edd family. Homodimer. Requires [2Fe-2S] cluster as cofactor. Mg(2+) is required as a cofactor.

The enzyme catalyses (2R)-2,3-dihydroxy-3-methylbutanoate = 3-methyl-2-oxobutanoate + H2O. The catalysed reaction is (2R,3R)-2,3-dihydroxy-3-methylpentanoate = (S)-3-methyl-2-oxopentanoate + H2O. Its pathway is amino-acid biosynthesis; L-isoleucine biosynthesis; L-isoleucine from 2-oxobutanoate: step 3/4. The protein operates within amino-acid biosynthesis; L-valine biosynthesis; L-valine from pyruvate: step 3/4. Functionally, functions in the biosynthesis of branched-chain amino acids. Catalyzes the dehydration of (2R,3R)-2,3-dihydroxy-3-methylpentanoate (2,3-dihydroxy-3-methylvalerate) into 2-oxo-3-methylpentanoate (2-oxo-3-methylvalerate) and of (2R)-2,3-dihydroxy-3-methylbutanoate (2,3-dihydroxyisovalerate) into 2-oxo-3-methylbutanoate (2-oxoisovalerate), the penultimate precursor to L-isoleucine and L-valine, respectively. This Bacillus velezensis (strain DSM 23117 / BGSC 10A6 / LMG 26770 / FZB42) (Bacillus amyloliquefaciens subsp. plantarum) protein is Dihydroxy-acid dehydratase.